A 150-amino-acid polypeptide reads, in one-letter code: Dihydroneopterin triphosphate diphosphatase (150 aa).

In terms of domain architecture, Nudix hydrolase spans 5-146 (VYKRPVSILV…SNRQAIEQFV (142 aa)). The substrate site is built by lysine 7, arginine 29, and threonine 40. The short motif at 41–62 (GSVEEGETAPQAAMREVKEEVT) is the Nudix box element. Glutamate 56 and glutamate 60 together coordinate Mg(2+). Residue 81-84 (FEIF) coordinates substrate. Residue glutamate 117 participates in Mg(2+) binding. Substrate is bound at residue serine 135.

The protein belongs to the Nudix hydrolase family. It depends on Mg(2+) as a cofactor.

It carries out the reaction 7,8-dihydroneopterin 3'-triphosphate + H2O = 7,8-dihydroneopterin 3'-phosphate + diphosphate + H(+). Functionally, catalyzes the hydrolysis of dihydroneopterin triphosphate to dihydroneopterin monophosphate and pyrophosphate. Required for efficient folate biosynthesis. Can also hydrolyze nucleoside triphosphates with a preference for dATP. The chain is Dihydroneopterin triphosphate diphosphatase (nudB) from Escherichia coli O157:H7.